Here is a 102-residue protein sequence, read N- to C-terminus: UPF0235 protein Swol_0959 (102 aa).

Belongs to the UPF0235 family.

The chain is UPF0235 protein Swol_0959 from Syntrophomonas wolfei subsp. wolfei (strain DSM 2245B / Goettingen).